Consider the following 319-residue polypeptide: ATP-dependent 6-phosphofructokinase (319 aa).

Gly-11 lines the ATP pocket. ADP is bound at residue 21–25; it reads RAVVR. ATP contacts are provided by residues 72–73 and 102–105; these read RC and GDGS. Asp-103 lines the Mg(2+) pocket. A substrate-binding site is contributed by 125–127; that stretch reads TID. Asp-127 functions as the Proton acceptor in the catalytic mechanism. Arg-154 contacts ADP. Residues Arg-162 and 169 to 171 each bind substrate; that span reads MGR. Residues 185–187, Arg-211, and 213–215 each bind ADP; these read GAE and KKH. Residues Glu-222, Arg-243, and 249-252 contribute to the substrate site; that span reads HVQR.

Belongs to the phosphofructokinase type A (PFKA) family. ATP-dependent PFK group I subfamily. Prokaryotic clade 'B1' sub-subfamily. In terms of assembly, homotetramer. Requires Mg(2+) as cofactor.

The protein resides in the cytoplasm. It carries out the reaction beta-D-fructose 6-phosphate + ATP = beta-D-fructose 1,6-bisphosphate + ADP + H(+). It participates in carbohydrate degradation; glycolysis; D-glyceraldehyde 3-phosphate and glycerone phosphate from D-glucose: step 3/4. Its activity is regulated as follows. Allosterically activated by ADP and other diphosphonucleosides, and allosterically inhibited by phosphoenolpyruvate. Functionally, catalyzes the phosphorylation of D-fructose 6-phosphate to fructose 1,6-bisphosphate by ATP, the first committing step of glycolysis. In Bacillus cytotoxicus (strain DSM 22905 / CIP 110041 / 391-98 / NVH 391-98), this protein is ATP-dependent 6-phosphofructokinase.